Reading from the N-terminus, the 532-residue chain is Probable calcium-binding mitochondrial carrier CBG00135 (532 aa).

EF-hand domains lie at 70–105 (EKEK…QTPH), 107–136 (PATM…NYVI), 137–172 (AHEA…MGVN), and 173–208 (LDDH…YPST). Ca(2+) contacts are provided by D83, D85, D87, S89, and D94. Ca(2+) is bound by residues D150, N152, D154, E156, and E161. Solcar repeat units lie at residues 243-329 (GVWW…IKRW), 339-425 (LTTY…LKSC), and 436-526 (PGVL…VRKQ). 6 consecutive transmembrane segments (helical) span residues 249 to 266 (LVAG…TAPF), 304 to 323 (GNGI…FMSY), 349 to 362 (SSAG…IYPM), 400 to 419 (GYLP…LTVY), 442 to 459 (LACG…SYPL), and 501 to 518 (GITP…ISYV).

The protein belongs to the mitochondrial carrier (TC 2.A.29) family.

It is found in the mitochondrion inner membrane. In terms of biological role, calcium-dependent mitochondrial solute carrier. In Caenorhabditis briggsae, this protein is Probable calcium-binding mitochondrial carrier CBG00135.